We begin with the raw amino-acid sequence, 181 residues long: CDP-archaeol synthase (181 aa).

A run of 5 helical transmembrane segments spans residues 7–27, 55–75, 80–100, 128–148, and 150–170; these read VVVA…AVLA, AVGT…RPAA, GVVL…GAMV, FVVV…GDTF, and LPVL…TNGI.

It belongs to the CDP-archaeol synthase family. The cofactor is Mg(2+).

Its subcellular location is the cell membrane. It catalyses the reaction 2,3-bis-O-(geranylgeranyl)-sn-glycerol 1-phosphate + CTP + H(+) = CDP-2,3-bis-O-(geranylgeranyl)-sn-glycerol + diphosphate. The protein operates within membrane lipid metabolism; glycerophospholipid metabolism. Catalyzes the formation of CDP-2,3-bis-(O-geranylgeranyl)-sn-glycerol (CDP-archaeol) from 2,3-bis-(O-geranylgeranyl)-sn-glycerol 1-phosphate (DGGGP) and CTP. This reaction is the third ether-bond-formation step in the biosynthesis of archaeal membrane lipids. The protein is CDP-archaeol synthase of Halobacterium salinarum (strain ATCC 29341 / DSM 671 / R1).